The primary structure comprises 468 residues: MSKTLYDKLWENHVVHQEADGTALLYIDRHLIHEVTSPQAFEGLKLAGRKPWRVSSIVATPDHNTPTDHWEEGIKDPISRQQVETLDANIREVGALAYFPFKDQRMGILHVVGPENGATLPGMTVVCGDSHTSTHGAFACMAHGIGTSEVEHVLATQCLLQKRSKTMLVAVEGKLGKGVTAKDVALAIIGTIGTAGGTGYAIEFGGSAIRGLSMEGRMTLCNMAIEGGARLGFVAVDDTTINYLKGRPFSPTGETWDRAVAYWRTLHSDAGAQFDRVVTLRAEDIRPQVTWGTSPEMVVSVDAVVPDPAKEADPVKREGMERALQYMGLNPNTPINQIAIDKVFIGSCTNSRIEDLREAASVLKGRHVAANVKLALAVPGSGLVKRQAEAEGLDKVFVAAGFEWREPGCSMCLAMNADRLEPGERCASTSNRNFEGRQGPGGRTHLVSPAMAAAAAIAGRFADVRDVL.

[4Fe-4S] cluster contacts are provided by cysteine 348, cysteine 409, and cysteine 412.

The protein belongs to the aconitase/IPM isomerase family. LeuC type 1 subfamily. In terms of assembly, heterodimer of LeuC and LeuD. The cofactor is [4Fe-4S] cluster.

The enzyme catalyses (2R,3S)-3-isopropylmalate = (2S)-2-isopropylmalate. Its pathway is amino-acid biosynthesis; L-leucine biosynthesis; L-leucine from 3-methyl-2-oxobutanoate: step 2/4. Functionally, catalyzes the isomerization between 2-isopropylmalate and 3-isopropylmalate, via the formation of 2-isopropylmaleate. This is 3-isopropylmalate dehydratase large subunit from Dechloromonas aromatica (strain RCB).